A 236-amino-acid polypeptide reads, in one-letter code: ATP-dependent dethiobiotin synthetase BioD (236 aa).

Thr-19 contacts Mg(2+). Residue Lys-40 is part of the active site. Mg(2+)-binding residues include Asp-61 and Glu-122. ATP-binding positions include Asp-61, 122–125, 182–183, and 211–213; these read EGVG, NT, and PRL.

The protein belongs to the dethiobiotin synthetase family. As to quaternary structure, homodimer. Mg(2+) is required as a cofactor.

The protein resides in the cytoplasm. The catalysed reaction is (7R,8S)-7,8-diammoniononanoate + CO2 + ATP = (4R,5S)-dethiobiotin + ADP + phosphate + 3 H(+). Its pathway is cofactor biosynthesis; biotin biosynthesis; biotin from 7,8-diaminononanoate: step 1/2. Its function is as follows. Catalyzes a mechanistically unusual reaction, the ATP-dependent insertion of CO2 between the N7 and N8 nitrogen atoms of 7,8-diaminopelargonic acid (DAPA, also called 7,8-diammoniononanoate) to form a ureido ring. The polypeptide is ATP-dependent dethiobiotin synthetase BioD (Janthinobacterium sp. (strain Marseille) (Minibacterium massiliensis)).